The chain runs to 481 residues: MSVFARATSLFSRAARTRAADEAARSRSRWVTLVFLAVLQLLIAVDVTVVNIALPAIRDSFHVDTRQLTWVVTGYTVVGGGLLMVGGRIADLFGRRRTLLFGAFLFGASSLAAGLAPNLELLVLARFGQGAGEALSLPAAMSLIACSSRTAPFQGVERLASVASVGLVLGFLLSGVITQLFSWRWIFLINIPLVSLVLVAVLLLVKKDETTARNPVDLPGALLFTAAPLLLIFGVNELGEDEPRLPLAVGSLLAAAVCAAAFVAVERRTAHPLVPLTFFGNRVRLVANGATVLLSAALSTSFFLLTMHLQEERDLSPIEAGLSFLPLGLSLILACVLVRGLIERIGTTGAAVLGMALAGPRHRLFALLPSDNSLLTSVFPGMILLLRMATGLVALQNAALHAVTEADAGVASGVQRCADQLGGASGIAVYVSIGFSPHLGGDWDPFTVAYSLAGIGLIAAVLAVLALSPDRRLAAPREQED.

Transmembrane regions (helical) follow at residues 30-50 (WVTL…VTVV), 67-87 (QLTW…MVGG), 99-119 (LLFG…APNL), 127-147 (FGQG…IACS), 162-182 (VASV…QLFS), 185-205 (WIFL…LLLV), 215-235 (PVDL…IFGV), 245-265 (LPLA…FVAV), 285-305 (LVAN…FFLL), 318-338 (IEAG…CVLV), 340-360 (GLIE…LAGP), 374-394 (LLTS…GLVA), 421-441 (LGGA…HLGG), and 446-466 (FTVA…AVLA).

This sequence belongs to the major facilitator superfamily. TCR/Tet family.

Its subcellular location is the cell membrane. Its function is as follows. Proton-dependent transporter. May mediate the efflux of lincomycin. The chain is Lincomycin resistance protein (lmrA) from Streptomyces lincolnensis.